A 1037-amino-acid polypeptide reads, in one-letter code: Glycine dehydrogenase (decarboxylating) 1, mitochondrial (1037 aa).

The transit peptide at 1–67 directs the protein to the mitochondrion; that stretch reads MERARRLAYR…AFGRHQQTRS (67 aa). S-glutathionyl cysteine; transient is present on cysteine 98. S-glutathionyl cysteine occurs at positions 402 and 463. N6-(pyridoxal phosphate)lysine is present on lysine 774. S-glutathionyl cysteine; transient occurs at positions 777, 943, and 1022.

This sequence belongs to the GcvP family. Homodimer. The glycine cleavage system is composed of four proteins: P, T, L and H. Requires pyridoxal 5'-phosphate as cofactor. Glutathionylated at Cys-98, Cys-777, Cys-943 and Cys-1022 after S-nitrosoglutathione treatment. In terms of processing, S-nitrosylated at unknown positions by nitric oxide. As to expression, expressed in leaves. Detected in roots, stems, flowers and siliques.

It localises to the mitochondrion. It catalyses the reaction N(6)-[(R)-lipoyl]-L-lysyl-[glycine-cleavage complex H protein] + glycine + H(+) = N(6)-[(R)-S(8)-aminomethyldihydrolipoyl]-L-lysyl-[glycine-cleavage complex H protein] + CO2. Its activity is regulated as follows. Inhibited by harpin, S-nitrosoglutathione (GSNO), nitric oxide, N-ethylmaleimide and 5,5'-dithiobis-(2-nitrobenzoic acid). The glycine decarboxylase (GDC) or glycine cleavage system catalyzes the degradation of glycine. The P protein binds the alpha-amino group of glycine through its pyridoxal phosphate cofactor; CO(2) is released and the remaining methylamine moiety is then transferred to the lipoamide cofactor of the H protein. The chain is Glycine dehydrogenase (decarboxylating) 1, mitochondrial (GLDP1) from Arabidopsis thaliana (Mouse-ear cress).